The following is a 356-amino-acid chain: NADH-quinone oxidoreductase subunit H (356 aa).

8 consecutive transmembrane segments (helical) span residues isoleucine 18–isoleucine 38, glycine 87–isoleucine 107, valine 120–glycine 140, isoleucine 166–valine 186, isoleucine 205–leucine 225, alanine 265–isoleucine 285, tryptophan 292–methionine 312, and phenylalanine 333–isoleucine 353.

The protein belongs to the complex I subunit 1 family. NDH-1 is composed of 14 different subunits. Subunits NuoA, H, J, K, L, M, N constitute the membrane sector of the complex.

The protein resides in the cell inner membrane. It carries out the reaction a quinone + NADH + 5 H(+)(in) = a quinol + NAD(+) + 4 H(+)(out). Functionally, NDH-1 shuttles electrons from NADH, via FMN and iron-sulfur (Fe-S) centers, to quinones in the respiratory chain. The immediate electron acceptor for the enzyme in this species is believed to be ubiquinone. Couples the redox reaction to proton translocation (for every two electrons transferred, four hydrogen ions are translocated across the cytoplasmic membrane), and thus conserves the redox energy in a proton gradient. This subunit may bind ubiquinone. This Bradyrhizobium sp. (strain ORS 278) protein is NADH-quinone oxidoreductase subunit H.